A 298-amino-acid polypeptide reads, in one-letter code: ATP synthase gamma chain (298 aa).

The protein belongs to the ATPase gamma chain family. F-type ATPases have 2 components, CF(1) - the catalytic core - and CF(0) - the membrane proton channel. CF(1) has five subunits: alpha(3), beta(3), gamma(1), delta(1), epsilon(1). CF(0) has three main subunits: a, b and c.

It localises to the cell inner membrane. Its function is as follows. Produces ATP from ADP in the presence of a proton gradient across the membrane. The gamma chain is believed to be important in regulating ATPase activity and the flow of protons through the CF(0) complex. The sequence is that of ATP synthase gamma chain from Wolinella succinogenes (strain ATCC 29543 / DSM 1740 / CCUG 13145 / JCM 31913 / LMG 7466 / NCTC 11488 / FDC 602W) (Vibrio succinogenes).